A 229-amino-acid chain; its full sequence is Orotate phosphoribosyltransferase (229 aa).

Residues R107, K108, K111, H113, and E133–S141 each bind 5-phospho-alpha-D-ribose 1-diphosphate. T137 lines the orotate pocket.

Belongs to the purine/pyrimidine phosphoribosyltransferase family. PyrE subfamily. As to quaternary structure, homodimer. It depends on Mg(2+) as a cofactor.

It catalyses the reaction orotidine 5'-phosphate + diphosphate = orotate + 5-phospho-alpha-D-ribose 1-diphosphate. Its pathway is pyrimidine metabolism; UMP biosynthesis via de novo pathway; UMP from orotate: step 1/2. Its function is as follows. Catalyzes the transfer of a ribosyl phosphate group from 5-phosphoribose 1-diphosphate to orotate, leading to the formation of orotidine monophosphate (OMP). This Rhizobium etli (strain ATCC 51251 / DSM 11541 / JCM 21823 / NBRC 15573 / CFN 42) protein is Orotate phosphoribosyltransferase.